Here is a 196-residue protein sequence, read N- to C-terminus: CRISPR-associated exonuclease Cas4 (196 aa).

Cysteine 23 contributes to the [4Fe-4S] cluster binding site. Residues histidine 50, aspartate 90, and glutamate 103 each contribute to the Mn(2+) site. Cysteine 184, cysteine 187, and cysteine 193 together coordinate [4Fe-4S] cluster.

Belongs to the CRISPR-associated exonuclease Cas4 family. Mg(2+) serves as cofactor. It depends on [4Fe-4S] cluster as a cofactor.

The catalysed reaction is exonucleolytic cleavage in the 5'- to 3'-direction to yield nucleoside 3'-phosphates.. Functionally, CRISPR (clustered regularly interspaced short palindromic repeat) is an adaptive immune system that provides protection against mobile genetic elements (viruses, transposable elements and conjugative plasmids). CRISPR clusters contain sequences complementary to antecedent mobile elements and target invading nucleic acids. CRISPR clusters are transcribed and processed into CRISPR RNA (crRNA). This may be a 5' to 3' ssDNA exonuclease. The polypeptide is CRISPR-associated exonuclease Cas4 (Francisella tularensis subsp. novicida (strain U112)).